Reading from the N-terminus, the 284-residue chain is Kynurenine formamidase avaC (284 aa).

Positions 47–51 match the HGGXW motif; that stretch reads HGGGW. Ser130 acts as the Nucleophile in catalysis.

This sequence belongs to the kynurenine formamidase family.

It catalyses the reaction N-formyl-L-kynurenine + H2O = L-kynurenine + formate + H(+). It participates in secondary metabolite metabolism. Functionally, kynurenine formamidase; part of the cluster that mediates the biosynthesis of a highly modified cyclo-arginine-tryptophan dipeptide (cRW). Within the pathway, avaC catalyzes the deformylation of the cyclo-Arg-formylkynurenine iketopiperazine (DKP), produced by the FAD-dependent monooxygenase avaB. The first step of the pathway is perfornmed by the arginine-containing cyclodipeptide synthase (RCPDS) avaA that acts as the scaffold-generating enzyme and is responsible for formation of the cyclo-Arg-Trp (cRW) diketopiperazine. AvaB then acts as a multifunctional flavoenzyme that is responsible for generating the cyclo-Arg-formylkynurenine DKP, which can be deformylated by avaC. AvaB then further catalyzes an additional N-oxidation followed by cyclization and dehydration. The next step is an N-acetylation of the guanidine group catalyzed by the arginine N-acetyltransferase avaD. The roles of the additional enzymes identified within the ava cluster still have to be determined. The chain is Kynurenine formamidase avaC from Aspergillus versicolor.